A 307-amino-acid polypeptide reads, in one-letter code: L-lactate dehydrogenase (307 aa).

NAD(+) contacts are provided by residues Val13, Asp34, Arg39, Tyr64, and 78–79; that span reads GV. Substrate is bound at residue Arg87. NAD(+) is bound at residue Ser100. Position 119-122 (119-122) interacts with substrate; the sequence is NPVD. Residue Thr142 participates in NAD(+) binding. Residue 147-150 participates in substrate binding; sequence DSAR. The Proton acceptor role is filled by His174. Thr224 serves as a coordination point for substrate.

This sequence belongs to the LDH/MDH superfamily. LDH family. Homotetramer.

The protein localises to the cytoplasm. It carries out the reaction (S)-lactate + NAD(+) = pyruvate + NADH + H(+). It functions in the pathway fermentation; pyruvate fermentation to lactate; (S)-lactate from pyruvate: step 1/1. In terms of biological role, catalyzes the conversion of lactate to pyruvate. This chain is L-lactate dehydrogenase, found in Lactobacillus delbrueckii subsp. bulgaricus (strain ATCC BAA-365 / Lb-18).